A 355-amino-acid polypeptide reads, in one-letter code: GTPase Obg (355 aa).

One can recognise an Obg domain in the interval 1-159; the sequence is MKLVDEAEIL…RLLKLELKLL (159 aa). An OBG-type G domain is found at 160 to 342; the sequence is ADVGLLGFPN…IMKDVMAFFD (183 aa). Residues 166–173, 191–195, 213–216, 292–295, and 323–325 contribute to the GTP site; these read GFPNAGKS, FTTLY, DVPG, NKAD, and SAL. Mg(2+)-binding residues include Ser-173 and Thr-193.

This sequence belongs to the TRAFAC class OBG-HflX-like GTPase superfamily. OBG GTPase family. In terms of assembly, monomer. Requires Mg(2+) as cofactor.

The protein resides in the cytoplasm. Its function is as follows. An essential GTPase which binds GTP, GDP and possibly (p)ppGpp with moderate affinity, with high nucleotide exchange rates and a fairly low GTP hydrolysis rate. Plays a role in control of the cell cycle, stress response, ribosome biogenesis and in those bacteria that undergo differentiation, in morphogenesis control. The sequence is that of GTPase Obg from Xanthomonas euvesicatoria pv. vesicatoria (strain 85-10) (Xanthomonas campestris pv. vesicatoria).